We begin with the raw amino-acid sequence, 451 residues long: UDP-N-acetylmuramate--L-alanine ligase (451 aa).

Residue 110 to 116 coordinates ATP; the sequence is GTHGKTT.

It belongs to the MurCDEF family.

It localises to the cytoplasm. It catalyses the reaction UDP-N-acetyl-alpha-D-muramate + L-alanine + ATP = UDP-N-acetyl-alpha-D-muramoyl-L-alanine + ADP + phosphate + H(+). The protein operates within cell wall biogenesis; peptidoglycan biosynthesis. In terms of biological role, cell wall formation. The polypeptide is UDP-N-acetylmuramate--L-alanine ligase (Francisella tularensis subsp. novicida (strain U112)).